Here is an 872-residue protein sequence, read N- to C-terminus: Tetratricopeptide repeat protein 16 (872 aa).

Residues 1 to 20 (MTDSDEDALKVDQGPSQDIP) are disordered. 8 TPR repeats span residues 61–94 (VREY…DPQL), 96–128 (DFYA…QQDN), 136–169 (TFVL…QPEK), 251–284 (AQQA…NPLD), 285–318 (PSFF…VTED), 331–364 (LLTY…EQQE), 365–398 (KGLY…SPQD), and 406–439 (GLLQ…NPQK). Disordered stretches follow at residues 557 to 640 (ATPE…ETET) and 653 to 872 (TAMT…YEVL). Residues 577–590 (KEEEEKEEEEQKEE) are compositionally biased toward acidic residues. The segment covering 591-604 (EEQKKEEKKEEKKP) has biased composition (basic and acidic residues). Polar residues-rich tracts occupy residues 610–640 (KVAS…ETET), 653–675 (TAMT…NNRE), 689–709 (GQRQ…NFSK), and 721–754 (KTKA…SQGP). Positions 762–783 (KTTRSPRQRPRKVKAARGRSWR) are enriched in basic residues. 2 stretches are compositionally biased toward polar residues: residues 799–827 (RSST…GQRT) and 839–861 (GMSS…SKTE).

The chain is Tetratricopeptide repeat protein 16 (TTC16) from Macaca fascicularis (Crab-eating macaque).